The primary structure comprises 197 residues: Holliday junction branch migration complex subunit RuvA (197 aa).

The tract at residues 1-64 is domain I; that stretch reads MIASVRGVVQ…EDMLALFGFS (64 aa). Residues 65–143 are domain II; it reads SPAQRALFEL…VATISPQLST (79 aa). Positions 144-153 are flexible linker; that stretch reads NPGLLALNTE. Residues 153–197 are domain III; it reads ELIDILTSLGYSTTEAQAALNALPADAPADTEERLRLALQYFGGV.

This sequence belongs to the RuvA family. As to quaternary structure, homotetramer. Forms an RuvA(8)-RuvB(12)-Holliday junction (HJ) complex. HJ DNA is sandwiched between 2 RuvA tetramers; dsDNA enters through RuvA and exits via RuvB. An RuvB hexamer assembles on each DNA strand where it exits the tetramer. Each RuvB hexamer is contacted by two RuvA subunits (via domain III) on 2 adjacent RuvB subunits; this complex drives branch migration. In the full resolvosome a probable DNA-RuvA(4)-RuvB(12)-RuvC(2) complex forms which resolves the HJ.

It is found in the cytoplasm. In terms of biological role, the RuvA-RuvB-RuvC complex processes Holliday junction (HJ) DNA during genetic recombination and DNA repair, while the RuvA-RuvB complex plays an important role in the rescue of blocked DNA replication forks via replication fork reversal (RFR). RuvA specifically binds to HJ cruciform DNA, conferring on it an open structure. The RuvB hexamer acts as an ATP-dependent pump, pulling dsDNA into and through the RuvAB complex. HJ branch migration allows RuvC to scan DNA until it finds its consensus sequence, where it cleaves and resolves the cruciform DNA. The chain is Holliday junction branch migration complex subunit RuvA from Herpetosiphon aurantiacus (strain ATCC 23779 / DSM 785 / 114-95).